Consider the following 431-residue polypeptide: MSTQHGPKSTRTNDLYELAVNISSTVEAFVGRLDAIGAERPNLDNPFPEIIQDEGAQLARLKILRLCERLMALVQGPVQWLMFQNMAFLDAACVGAILDMGIHDIIAPGPEPTSLDQIVEATGASKDILKRIMRVCTQRLVFDEIAPEQFIHNGVSLQFLAPPVQALISHACDDGLRMAAHFTDSLKKTDWKGSDDPENTAFSLAFNTNKGLFDYFYTEDLARGQRFALGMAGSEIMKTLTEDMFPFESLPQGAKVVDVGGGRGHVSVRIAEKVPGLNFVVQDDESMLEAGQAEGVPKAVKDRIEFMPHDFFNEQPVKGADVYLLRFILHDHSDSRCAKILSNIVDAMEPGKSRILIDDAIVPSFLGPESSRFFNLLDLYMLAGLNGKERTLEQWNYLIQMVSPKLVLEKVWKTPNGGPESGTILELRLQE.

Asp283 serves as a coordination point for S-adenosyl-L-methionine. Catalysis depends on His330, which acts as the Proton acceptor.

Belongs to the class I-like SAM-binding methyltransferase superfamily. Cation-independent O-methyltransferase family.

It functions in the pathway secondary metabolite biosynthesis. O-methyltransferase; part of the gene cluster that mediates the biosynthesis of the isocyanide xanthocillin and its derivatives. The first step of the pathway consists in the conversion of tyrosine into a vinyl-isonitrile intermediate by the isocyanide synthase xanB. Subsequent oxidative dimerization of this intermediate to form xanthocillin may involve the cytochrome P450 monooxygenase xanG, whose expression is coregulated with that of XanB. Xanthocillin can be further modified by the isonitrile hydratase-like protein xanA which introduces N-formyl groups and the methyltransferase xanE which introduces methyl groups, leading to the production of several derivatives including fumiformamide. Finally, fumiformamide can be subject to both oxidative and reductive cyclization to yield melanocins E and F, respectively. This chain is O-methyltransferase xanE, found in Aspergillus fumigatus (strain ATCC MYA-4609 / CBS 101355 / FGSC A1100 / Af293) (Neosartorya fumigata).